Reading from the N-terminus, the 313-residue chain is Pseudouridine-5'-phosphate glycosidase (313 aa).

The active-site Proton donor is Glu26. Substrate-binding residues include Lys87 and Ala107. Residue Asp139 participates in Mn(2+) binding. 141–143 (SAD) is a substrate binding site. The active-site Nucleophile is the Lys160.

It belongs to the pseudouridine-5'-phosphate glycosidase family. As to quaternary structure, homotrimer. The cofactor is Mn(2+).

The enzyme catalyses D-ribose 5-phosphate + uracil = psi-UMP + H2O. Functionally, catalyzes the reversible cleavage of pseudouridine 5'-phosphate (PsiMP) to ribose 5-phosphate and uracil. Functions biologically in the cleavage direction, as part of a pseudouridine degradation pathway. The sequence is that of Pseudouridine-5'-phosphate glycosidase from Corynebacterium aurimucosum (strain ATCC 700975 / DSM 44827 / CIP 107346 / CN-1) (Corynebacterium nigricans).